Reading from the N-terminus, the 404-residue chain is Iron-sulfur assembly protein IscA2 (404 aa).

Residues 244 to 289 are a coiled coil; that stretch reads KEEDEKKLDKLLKKRNIKKRDIVTITEEAKEELKKIISINKKENNN.

It belongs to the HesB/IscA family. Dimer. Homotetramer. Interacts with ABCB6.

It is found in the mitochondrion. It functions in the pathway cofactor biosynthesis; iron-sulfur cluster biosynthesis. Participates in iron-sulfur cluster formation (ISC) pathway for iron-sulfur (Fe-S) cluster biogenesis. Can bind and transfer [4Fe-4S] clusters to target apo-proteins. This chain is Iron-sulfur assembly protein IscA2, found in Plasmodium falciparum (isolate 3D7).